The primary structure comprises 37 residues: Large ribosomal subunit protein bL36 (37 aa).

It belongs to the bacterial ribosomal protein bL36 family.

This is Large ribosomal subunit protein bL36 from Nocardioides sp. (strain ATCC BAA-499 / JS614).